A 306-amino-acid polypeptide reads, in one-letter code: Replication termination factor 2 (306 aa).

The tract at residues 193-276 (AKLEKKTKKP…RSIADSEESE (84 aa)) is disordered. Residues 226 to 240 (GKPEEASLDSREKKT) show a composition bias toward basic and acidic residues. Polar residues predominate over residues 243–255 (APKSTAMNESSSG). A Phosphoserine modification is found at serine 287.

The protein belongs to the rtf2 family. Interacts with DDI2; probably also interacts with DDI1. Post-translationally, undergoes proteasomal degradation, via DDI1 and DDI2. Removal from stalled replisomes and degradation are required for genome stability.

It localises to the chromosome. Replication termination factor which is a component of the elongating replisome. Required for ATR pathway signaling upon DNA damage and has a positive activity during DNA replication. Might function to facilitate fork pausing at replication fork barriers like the rDNA. May be globally required to stimulate ATR signaling after the fork stalls or encounters a lesion. Interacts with nascent DNA. This is Replication termination factor 2 from Homo sapiens (Human).